The chain runs to 297 residues: Phosphatidylglycerol--prolipoprotein diacylglyceryl transferase (297 aa).

3 consecutive transmembrane segments (helical) span residues 17-37, 59-79, and 97-117; these read LAVR…IVVG, MLFY…VLFY, and GGMS…LFAW. R142 is an a 1,2-diacyl-sn-glycero-3-phospho-(1'-sn-glycerol) binding site. 2 consecutive transmembrane segments (helical) span residues 230–250 and 257–277; these read MGAV…TVEF and FLGL…PMIV.

This sequence belongs to the Lgt family.

The protein localises to the cell inner membrane. It carries out the reaction L-cysteinyl-[prolipoprotein] + a 1,2-diacyl-sn-glycero-3-phospho-(1'-sn-glycerol) = an S-1,2-diacyl-sn-glyceryl-L-cysteinyl-[prolipoprotein] + sn-glycerol 1-phosphate + H(+). The protein operates within protein modification; lipoprotein biosynthesis (diacylglyceryl transfer). Its function is as follows. Catalyzes the transfer of the diacylglyceryl group from phosphatidylglycerol to the sulfhydryl group of the N-terminal cysteine of a prolipoprotein, the first step in the formation of mature lipoproteins. This chain is Phosphatidylglycerol--prolipoprotein diacylglyceryl transferase, found in Burkholderia multivorans (strain ATCC 17616 / 249).